The primary structure comprises 377 residues: Nitric oxide reductase FlRd-NAD(+) reductase (377 aa).

The protein belongs to the FAD-dependent oxidoreductase family. FAD serves as cofactor.

The protein resides in the cytoplasm. The enzyme catalyses 2 reduced [nitric oxide reductase rubredoxin domain] + NAD(+) + H(+) = 2 oxidized [nitric oxide reductase rubredoxin domain] + NADH. Its pathway is nitrogen metabolism; nitric oxide reduction. One of at least two accessory proteins for anaerobic nitric oxide (NO) reductase. Reduces the rubredoxin moiety of NO reductase. This chain is Nitric oxide reductase FlRd-NAD(+) reductase, found in Klebsiella pneumoniae subsp. pneumoniae (strain ATCC 700721 / MGH 78578).